Consider the following 464-residue polypeptide: E3 ubiquitin-protein ligase parkin (464 aa).

Residues 1-76 (MIVFVRFNSS…VHIVQRPRRR (76 aa)) enclose the Ubiquitin-like domain. The residue at position 65 (Ser-65) is a Phosphoserine; by PINK1. The interval 70–96 (VQRPRRRSHETNASGGDEPQSTSEGSI) is disordered. The tract at residues 77 to 236 (SHETNASGGD…LITSNRRSIP (160 aa)) is necessary for PINK1-dependent localization to mitochondria. Thr-80 carries the post-translational modification Phosphothreonine. Polar residues predominate over residues 80 to 96 (TNASGGDEPQSTSEGSI). Residues 140-224 (PTYNSFFIYC…PTSDKDTSVA (85 aa)) form an RING-type 0; atypical zinc finger. A Phosphothreonine; by PINK1 modification is found at Thr-174. Residues 203–237 (TRAEFFFKCGAHPTSDKDTSVALNLITSNRRSIPC) form an SYT11 binding 1 region. Phosphothreonine is present on Thr-216. The interval 233 to 464 (RSIPCIACTD…ACMGDHWFDV (232 aa)) is TRIAD supradomain. Zn(2+) is bound by residues Cys-237, Cys-240, Cys-252, His-256, Cys-259, Cys-262, Cys-288, Cys-292, Cys-331, and Cys-336. The RING-type 1 zinc finger occupies 237-292 (CIACTDVRSPVLVFQCNHRHVICLDCFHLYCVTRLNDRQFVHDAQLGYSLPCVAGC). The interval 256–292 (HVICLDCFHLYCVTRLNDRQFVHDAQLGYSLPCVAGC) is SYT11 binding 2. The IBR-type zinc finger occupies 312–376 (TRYQQYGAEE…CKEAYHEGDC (65 aa)). Residue Lys-348 forms a Glycyl lysine isopeptide (Lys-Gly) (interchain with G-Cter in ISG15) linkage. The Zn(2+) site is built by Cys-351, Cys-359, Cys-364, and Cys-367. Lys-368 participates in a covalent cross-link: Glycyl lysine isopeptide (Lys-Gly) (interchain with G-Cter in ISG15). The Zn(2+) site is built by His-372 and Cys-376. Positions 377–409 (DSLLEPSGATSQAYRVDKRAAEQARWEEASKET) are REP. Residues Cys-417 and Cys-420 each contribute to the Zn(2+) site. The RING-type 2; atypical zinc finger occupies 417–448 (CPRCNVPIEKNGGCMHMKCPQPQCKLEWCWNC). Residue Cys-430 is part of the active site. Zn(2+) contacts are provided by Cys-435, Cys-440, Cys-445, Cys-448, Cys-456, and His-460.

It belongs to the RBR family. Parkin subfamily. As to quaternary structure, forms an E3 ubiquitin ligase complex with UBE2L3 or UBE2L6. Mediates 'Lys-63'-linked polyubiquitination by associating with UBE2V1. Part of a SCF-like complex, consisting of PRKN, CUL1 and FBXW7. Interacts with SNCAIP. Binds to the C2A and C2B domains of SYT11. Interacts and regulates the turnover of SEPTIN5. Part of a complex, including STUB1, HSP70 and GPR37. The amount of STUB1 in the complex increases during ER stress. STUB1 promotes the dissociation of HSP70 from PRKN and GPR37, thus facilitating PRKN-mediated GPR37 ubiquitination. HSP70 transiently associates with unfolded GPR37 and inhibits the E3 activity of PRKN, whereas, STUB1 enhances the E3 activity of PRKN through promotion of dissociation of HSP70 from PRKN-GPR37 complexes. Interacts with PSMD4 and PACRG. Interacts with LRRK2. Interacts with RANBP2. Interacts with SUMO1 but not SUMO2, which promotes nuclear localization and autoubiquitination. Interacts (via first RING-type domain) with AIMP2 (via N-terminus). Interacts with PSMA7 and RNF41. Interacts with PINK1. Forms a complex with PINK1 and PARK7. Interacts with CHPF, the interaction with isoform 2 may facilitate PRKN transport into the mitochondria. Interacts with MFN2 (phosphorylated), promotes PRKN localization in dysfunctional depolarized mitochondria. Interacts with FBXO7; this promotes translocation to dysfunctional depolarized mitochondria. Interacts with ZNF746. Interacts with heat shock protein 70 family members, including HSPA1L, HSPA1A and HSPA8; interaction HSPA1L promotes translocation to damaged mitochondria. Interacts with BAG4 and, to a lesser extent, BAG5; interaction with BAG4 inhibits translocation to damaged mitochondria. Forms a complex with PRKN and PARK7. Interacts with AMBRA1. Post-translationally, auto-ubiquitinates in an E2-dependent manner leading to its own degradation. Also polyubiquitinated by RNF41 for proteasomal degradation. S-nitrosylated. In terms of processing, phosphorylated. Activation requires phosphorylation at Ser-65 by PINK1 and binding to PINK1 phosphorylated ubiquitin. Phosphorylation at Thr-174 by PINK1 and at Thr-216 is important for mitochondrial localization. As to expression, expressed in all subdivisions of the brain (at protein level). Highly expressed in brainstem, cranial nerve, pontine, cerebellar nuclei, indusium griseum, nuclei reticularis, strata oriens and laccunosum moleculare of the hippocampal CA2 region. Low levels were found in the telencephalon and diencephalon. Expressed in heart, liver, skeletal muscle, kidney and testis.

It is found in the cytoplasm. The protein localises to the cytosol. Its subcellular location is the nucleus. The protein resides in the endoplasmic reticulum. It localises to the mitochondrion. It is found in the mitochondrion outer membrane. The protein localises to the cell projection. Its subcellular location is the neuron projection. The protein resides in the postsynaptic density. It localises to the presynapse. It catalyses the reaction [E2 ubiquitin-conjugating enzyme]-S-ubiquitinyl-L-cysteine + [acceptor protein]-L-lysine = [E2 ubiquitin-conjugating enzyme]-L-cysteine + [acceptor protein]-N(6)-ubiquitinyl-L-lysine.. It participates in protein modification; protein ubiquitination. Its activity is regulated as follows. In the autoinhibited state the side chain of Phe-462 inserts into a hydrophobic groove in RING-0, occluding the ubiquitin acceptor site Cys-430, whereas the REP repressor element binds RING-1 and blocks its E2-binding site. Activation of PRKN requires 2 steps: (1) phosphorylation at Ser-65 by PINK1 and (2) binding to phosphorylated ubiquitin, leading to unlock repression of the catalytic Cys-430 by the RING-0 region via an allosteric mechanism and converting PRKN to its fully-active form. According to another report, phosphorylation at Ser-65 by PINK1 is not essential for activation and only binding to phosphorylated ubiquitin is essential to unlock repression. In addition, ISG15 conjugation positively regulates its ubiquitin E3 ligase activity by suppressing the intramolecular interaction that maintains its autoinhibited conformation. Functions within a multiprotein E3 ubiquitin ligase complex, catalyzing the covalent attachment of ubiquitin moieties onto substrate proteins. Substrates include SYT11 and VDAC1. Other substrates are BCL2, CCNE1, GPR37, RHOT1/MIRO1, MFN1, MFN2, STUB1, SNCAIP, SEPTIN5, TOMM20, USP30, ZNF746, MIRO1 and AIMP2. Mediates monoubiquitination as well as 'Lys-6', 'Lys-11', 'Lys-48'-linked and 'Lys-63'-linked polyubiquitination of substrates depending on the context. Participates in the removal and/or detoxification of abnormally folded or damaged protein by mediating 'Lys-63'-linked polyubiquitination of misfolded proteins such as PARK7: 'Lys-63'-linked polyubiquitinated misfolded proteins are then recognized by HDAC6, leading to their recruitment to aggresomes, followed by degradation. Mediates 'Lys-63'-linked polyubiquitination of a 22 kDa O-linked glycosylated isoform of SNCAIP, possibly playing a role in Lewy-body formation. Mediates monoubiquitination of BCL2, thereby acting as a positive regulator of autophagy. Protects against mitochondrial dysfunction during cellular stress, by acting downstream of PINK1 to coordinate mitochondrial quality control mechanisms that remove and replace dysfunctional mitochondrial components. Depending on the severity of mitochondrial damage and/or dysfunction, activity ranges from preventing apoptosis and stimulating mitochondrial biogenesis to regulating mitochondrial dynamics and eliminating severely damaged mitochondria via mitophagy. Activation and recruitment onto the outer membrane of damaged/dysfunctional mitochondria (OMM) requires PINK1-mediated phosphorylation of both PRKN and ubiquitin. After mitochondrial damage, functions with PINK1 to mediate the decision between mitophagy or preventing apoptosis by inducing either the poly- or monoubiquitination of VDAC1, respectively; polyubiquitination of VDAC1 promotes mitophagy, while monoubiquitination of VDAC1 decreases mitochondrial calcium influx which ultimately inhibits apoptosis. When cellular stress results in irreversible mitochondrial damage, promotes the autophagic degradation of dysfunctional depolarized mitochondria (mitophagy) by promoting the ubiquitination of mitochondrial proteins such as TOMM20, RHOT1/MIRO1, MFN1 and USP30. Preferentially assembles 'Lys-6'-, 'Lys-11'- and 'Lys-63'-linked polyubiquitin chains, leading to mitophagy. The PINK1-PRKN pathway also promotes fission of damaged mitochondria by PINK1-mediated phosphorylation which promotes the PRKN-dependent degradation of mitochondrial proteins involved in fission such as MFN2. This prevents the refusion of unhealthy mitochondria with the mitochondrial network or initiates mitochondrial fragmentation facilitating their later engulfment by autophagosomes. Regulates motility of damaged mitochondria via the ubiquitination and subsequent degradation of MIRO1 and MIRO2; in motor neurons, this likely inhibits mitochondrial intracellular anterograde transport along the axons which probably increases the chance of the mitochondria undergoing mitophagy in the soma. Involved in mitochondrial biogenesis via the 'Lys-48'-linked polyubiquitination of transcriptional repressor ZNF746/PARIS which leads to its subsequent proteasomal degradation and allows activation of the transcription factor PPARGC1A. Limits the production of reactive oxygen species (ROS). Regulates cyclin-E during neuronal apoptosis. In collaboration with CHPF isoform 2, may enhance cell viability and protect cells from oxidative stress. Independently of its ubiquitin ligase activity, protects from apoptosis by the transcriptional repression of p53/TP53. May protect neurons against alpha synuclein toxicity, proteasomal dysfunction, GPR37 accumulation, and kainate-induced excitotoxicity. May play a role in controlling neurotransmitter trafficking at the presynaptic terminal and in calcium-dependent exocytosis. May represent a tumor suppressor gene. This chain is E3 ubiquitin-protein ligase parkin, found in Mus musculus (Mouse).